The sequence spans 839 residues: Eukaryotic translation initiation factor 3 subunit C (839 aa).

The interval 1 to 93 (MSRFFVAGYN…DSDSEDEGRR (93 aa)) is disordered. Acidic residues-rich tracts occupy residues 14-27 (SSEE…DEEL) and 34-58 (GEQE…SDSD). A PCI domain is found at 585–759 (FHQHINLELL…AFIQFASTEP (175 aa)). The disordered stretch occupies residues 783-839 (EKTSSNGYGKKQPQQQQQQQQQQQQQQQQQKDLLQEDNSRFRYANVNTNNDEFQTTA). Residues 794 to 812 (QPQQQQQQQQQQQQQQQQQ) show a composition bias toward low complexity. Positions 827–839 (NVNTNNDEFQTTA) are enriched in polar residues.

The protein belongs to the eIF-3 subunit C family. Component of the eukaryotic translation initiation factor 3 (eIF-3) complex.

The protein resides in the cytoplasm. Its function is as follows. Component of the eukaryotic translation initiation factor 3 (eIF-3) complex, which is involved in protein synthesis of a specialized repertoire of mRNAs and, together with other initiation factors, stimulates binding of mRNA and methionyl-tRNAi to the 40S ribosome. The eIF-3 complex specifically targets and initiates translation of a subset of mRNAs involved in cell proliferation. The sequence is that of Eukaryotic translation initiation factor 3 subunit C from Scheffersomyces stipitis (strain ATCC 58785 / CBS 6054 / NBRC 10063 / NRRL Y-11545) (Yeast).